Consider the following 98-residue polypeptide: NADH-ubiquinone oxidoreductase chain 4L (98 aa).

Helical transmembrane passes span 1 to 21, 29 to 49, and 61 to 81; these read MSIV…GMLI, SLLC…LIIL, and IILL…LVMV.

This sequence belongs to the complex I subunit 4L family. In terms of assembly, core subunit of respiratory chain NADH dehydrogenase (Complex I) which is composed of 45 different subunits.

Its subcellular location is the mitochondrion inner membrane. The enzyme catalyses a ubiquinone + NADH + 5 H(+)(in) = a ubiquinol + NAD(+) + 4 H(+)(out). Its function is as follows. Core subunit of the mitochondrial membrane respiratory chain NADH dehydrogenase (Complex I) which catalyzes electron transfer from NADH through the respiratory chain, using ubiquinone as an electron acceptor. Part of the enzyme membrane arm which is embedded in the lipid bilayer and involved in proton translocation. In Herpestes javanicus (Small Indian mongoose), this protein is NADH-ubiquinone oxidoreductase chain 4L (MT-ND4L).